A 224-amino-acid polypeptide reads, in one-letter code: Ribose-5-phosphate isomerase A (224 aa).

Substrate contacts are provided by residues 32-35, 85-88, and 98-101; these read TGST, DGAD, and KGGG. The active-site Proton acceptor is the glutamate 107. Lysine 125 contacts substrate.

It belongs to the ribose 5-phosphate isomerase family. In terms of assembly, homodimer.

The catalysed reaction is aldehydo-D-ribose 5-phosphate = D-ribulose 5-phosphate. It participates in carbohydrate degradation; pentose phosphate pathway; D-ribose 5-phosphate from D-ribulose 5-phosphate (non-oxidative stage): step 1/1. Catalyzes the reversible conversion of ribose-5-phosphate to ribulose 5-phosphate. This chain is Ribose-5-phosphate isomerase A, found in Pseudomonas putida (strain ATCC 700007 / DSM 6899 / JCM 31910 / BCRC 17059 / LMG 24140 / F1).